Consider the following 280-residue polypeptide: ATP synthase subunit a (280 aa).

Helical transmembrane passes span 45-65 (AINV…LFLF), 105-125 (LVAP…LMDL), 126-146 (LPVD…LKVV), 159-179 (LSIF…GGFF), 190-210 (FLFP…PISL), 223-243 (MIFI…LFGG), and 250-270 (AVFH…LTIV).

The protein belongs to the ATPase A chain family. As to quaternary structure, F-type ATPases have 2 components, CF(1) - the catalytic core - and CF(0) - the membrane proton channel. CF(1) has five subunits: alpha(3), beta(3), gamma(1), delta(1), epsilon(1). CF(0) has three main subunits: a(1), b(2) and c(9-12). The alpha and beta chains form an alternating ring which encloses part of the gamma chain. CF(1) is attached to CF(0) by a central stalk formed by the gamma and epsilon chains, while a peripheral stalk is formed by the delta and b chains.

The protein resides in the cell inner membrane. Its function is as follows. Key component of the proton channel; it plays a direct role in the translocation of protons across the membrane. This chain is ATP synthase subunit a, found in Thiobacillus denitrificans (strain ATCC 25259 / T1).